A 662-amino-acid polypeptide reads, in one-letter code: UvrABC system protein B (662 aa).

Residues 25–182 (KGIEKREKFQ…KKLVEIQYER (158 aa)) enclose the Helicase ATP-binding domain. Residue 38-45 (GVTGSGKT) coordinates ATP. The short motif at 91 to 114 (YYDYYQPEAYVAQSDTYIEKDASI) is the Beta-hairpin element. In terms of domain architecture, Helicase C-terminal spans 429–595 (QIDDLYTSIQ…TIIKDIREVI (167 aa)). In terms of domain architecture, UVR spans 622–657 (DKLIEKYEEEMKEAAQNLQFEKAAHLRDVIYKLKKD).

Belongs to the UvrB family. In terms of assembly, forms a heterotetramer with UvrA during the search for lesions. Interacts with UvrC in an incision complex.

The protein localises to the cytoplasm. In terms of biological role, the UvrABC repair system catalyzes the recognition and processing of DNA lesions. A damage recognition complex composed of 2 UvrA and 2 UvrB subunits scans DNA for abnormalities. Upon binding of the UvrA(2)B(2) complex to a putative damaged site, the DNA wraps around one UvrB monomer. DNA wrap is dependent on ATP binding by UvrB and probably causes local melting of the DNA helix, facilitating insertion of UvrB beta-hairpin between the DNA strands. Then UvrB probes one DNA strand for the presence of a lesion. If a lesion is found the UvrA subunits dissociate and the UvrB-DNA preincision complex is formed. This complex is subsequently bound by UvrC and the second UvrB is released. If no lesion is found, the DNA wraps around the other UvrB subunit that will check the other stand for damage. The protein is UvrABC system protein B of Clostridium botulinum (strain Kyoto / Type A2).